Here is a 151-residue protein sequence, read N- to C-terminus: FUN14 domain-containing protein 1A (151 aa).

The short motif at 14-17 is the YXXL element; the sequence is YEVL. 3 helical membrane-spanning segments follow: residues 44–64, 71–91, and 130–150; these read YSVA…GFLF, AATA…GGYI, and FVKK…LGLA.

It belongs to the FUN14 family.

Its subcellular location is the mitochondrion outer membrane. Its function is as follows. Acts as an activator of hypoxia-induced mitophagy, an important mechanism for mitochondrial quality control. In Xenopus laevis (African clawed frog), this protein is FUN14 domain-containing protein 1A (fundc1-a).